A 257-amino-acid polypeptide reads, in one-letter code: Major prion protein (257 aa).

A signal peptide spans 1–24; that stretch reads MVKSHIGGWILVLFVAAWSDIGLC. The interval 25 to 234 is interaction with GRB2, ERI3 and SYN1; the sequence is KKRPKPGGGW…EYEAYAQRGA (210 aa). A disordered region spans residues 28–113; the sequence is PKPGGGWNTG…NKPSKPKTNM (86 aa). 5 tandem repeats follow at residues 54 to 62, 63 to 70, 71 to 78, 79 to 86, and 87 to 95. The interval 54–95 is 5 X 8 AA tandem repeats of P-H-G-G-G-W-G-Q; the sequence is PQGGGGWGQPHGGGWGQPHGGGWGQPHGGGWGQPHGGGGWGQ. Positions 55-100 are enriched in gly residues; that stretch reads QGGGGWGQPHGGGWGQPHGGGWGQPHGGGWGQPHGGGGWGQGGGSH. Histidine 64, glycine 65, glycine 66, histidine 72, glycine 73, glycine 74, histidine 80, glycine 81, glycine 82, histidine 88, glycine 90, and glycine 91 together coordinate Cu(2+). An intrachain disulfide couples cysteine 183 to cysteine 218. Residues asparagine 185 and asparagine 201 are each glycosylated (N-linked (GlcNAc...) asparagine). Residue alanine 234 is the site of GPI-anchor amidated alanine attachment. The propeptide at 235–257 is removed in mature form; the sequence is SVILFSSPPVILLISFLLFLIVG.

The protein belongs to the prion family. Monomer and homodimer. Has a tendency to aggregate into amyloid fibrils containing a cross-beta spine, formed by a steric zipper of superposed beta-strands. Soluble oligomers may represent an intermediate stage on the path to fibril formation. Copper binding may promote oligomerization. Interacts with GRB2, APP, ERI3/PRNPIP and SYN1. Mislocalized cytosolically exposed PrP interacts with MGRN1; this interaction alters MGRN1 subcellular location and causes lysosomal enlargement. Interacts with KIAA1191.

It is found in the cell membrane. It localises to the golgi apparatus. Its function is as follows. Its primary physiological function is unclear. Has cytoprotective activity against internal or environmental stresses. May play a role in neuronal development and synaptic plasticity. May be required for neuronal myelin sheath maintenance. May play a role in iron uptake and iron homeostasis. Soluble oligomers are toxic to cultured neuroblastoma cells and induce apoptosis (in vitro). Association with GPC1 (via its heparan sulfate chains) targets PRNP to lipid rafts. Also provides Cu(2+) or Zn(2+) for the ascorbate-mediated GPC1 deaminase degradation of its heparan sulfate side chains. In Sus scrofa (Pig), this protein is Major prion protein (PRNP).